Reading from the N-terminus, the 639-residue chain is Chaperone protein DnaK 1 (639 aa).

Threonine 199 bears the Phosphothreonine; by autocatalysis mark. Residues 603–612 (QQQAQAQQAP) show a composition bias toward low complexity. The tract at residues 603–639 (QQQAQAQQAPGGEGEQEAKQDDNVVDAEFEEVKDEKK) is disordered. Acidic residues predominate over residues 625-639 (NVVDAEFEEVKDEKK).

This sequence belongs to the heat shock protein 70 family.

In terms of biological role, acts as a chaperone. In Photobacterium profundum (strain SS9), this protein is Chaperone protein DnaK 1.